The primary structure comprises 207 residues: Reticulon-1-A (207 aa).

Residues 21-207 (AIDLLYWRDI…AKIPGTKQKE (187 aa)) enclose the Reticulon domain. Helical transmembrane passes span 35-55 (IVFGSVLLMLFSLIQFSVVSV) and 139-159 (VLMWLLTYVGALFNGLTLLIM).

As to expression, expressed in the animal hemisphere (presumptive neural ectoderm) of blastula and gastrula stage embryos, and along the anterior neural border, in the panplacodal primordium, and in the dorsolateral side of archenteron roof of late neurula embryos. At the tailbud stage, expression localizes to the central nervous system, including the spinal cord, prosencephalon, mesencephalon and rhombencephalon, as well as the lateral line placode, otic vesicle and pronephros.

It is found in the endoplasmic reticulum membrane. The protein localises to the nucleus. Functionally, inhibits amyloid precursor protein processing, probably by blocking BACE1 activity. This is Reticulon-1-A (rtn1-a) from Xenopus laevis (African clawed frog).